Reading from the N-terminus, the 261-residue chain is Endomucin (261 aa).

The N-terminal stretch at 1–18 is a signal peptide; the sequence is MELLQVTILFLLPSICSS. Asparagine 19, asparagine 28, asparagine 98, and asparagine 104 each carry an N-linked (GlcNAc...) asparagine glycan. Over 19–190 the chain is Extracellular; sequence NSTGVLEAAN…TSATSRSYSS (172 aa). Polar residues-rich tracts occupy residues 118–134 and 146–171; these read TLQSSKPKTETQSSIKT and ASPSKTGTLTSIPVTIPENTSQSQVI. A disordered region spans residues 118–183; that stretch reads TLQSSKPKTE…EGGKNASTSA (66 aa). Residues asparagine 164 and asparagine 178 are each glycosylated (N-linked (GlcNAc...) asparagine). Residues 191-211 form a helical membrane-spanning segment; it reads IILPVVIALIVITLSVFVLVG. Residues 212-261 are Cytoplasmic-facing; sequence LYRMCWKADPGTPENGNDQPQSDKESVKLLTVKTISHESGEHSAQGKTKN. The residue at position 237 (serine 237) is a Phosphoserine.

Post-translationally, highly O-glycosylated. Sialic acid-rich glycoprotein. Expressed in heart, kidney and lung.

The protein resides in the cell membrane. It is found in the membrane. It localises to the secreted. Its function is as follows. Endothelial sialomucin, also called endomucin or mucin-like sialoglycoprotein, which interferes with the assembly of focal adhesion complexes and inhibits interaction between cells and the extracellular matrix. This chain is Endomucin (EMCN), found in Homo sapiens (Human).